A 226-amino-acid chain; its full sequence is MFKKRSAASKTRKRVKVETPVQKPAVQKPAVAVKPVLDKSHVAKLEEEIASRPELDQKAVGEADATAVRLKRLKEQATKHDRLNSEPVASSKKIQQAANLRNTILTDFQPDVCKDFKQTGYCGYGDSCKFLHSRDDFKAGWTLATDWKIDEQKEETRKEAVPFKCVLCKESYERPVKTNCGHYFCQKCFVNRIKIDKSCFICGENTEGIAKMATDLVPMDNANKDK.

Positions 1 to 15 are enriched in basic residues; the sequence is MFKKRSAASKTRKRV. Residues 1–26 are disordered; sequence MFKKRSAASKTRKRVKVETPVQKPAV. The C3H1-type zinc finger occupies 107 to 135; the sequence is DFQPDVCKDFKQTGYCGYGDSCKFLHSRD. An RING-type zinc finger spans residues 165-203; that stretch reads CVLCKESYERPVKTNCGHYFCQKCFVNRIKIDKSCFICG.

The protein belongs to the CWC24 family. Associated with the spliceosome.

It is found in the nucleus. In terms of biological role, involved in pre-mRNA splicing. The chain is Pre-mRNA-splicing factor CWC24 (CWC24) from Candida glabrata (strain ATCC 2001 / BCRC 20586 / JCM 3761 / NBRC 0622 / NRRL Y-65 / CBS 138) (Yeast).